We begin with the raw amino-acid sequence, 200 residues long: Ribosomal RNA large subunit methyltransferase E (200 aa).

Residues Gly51, Trp53, Asp71, Asp90, and Asp112 each contribute to the S-adenosyl-L-methionine site. The Proton acceptor role is filled by Lys151.

The protein belongs to the class I-like SAM-binding methyltransferase superfamily. RNA methyltransferase RlmE family.

It localises to the cytoplasm. It carries out the reaction uridine(2552) in 23S rRNA + S-adenosyl-L-methionine = 2'-O-methyluridine(2552) in 23S rRNA + S-adenosyl-L-homocysteine + H(+). Its function is as follows. Specifically methylates the uridine in position 2552 of 23S rRNA at the 2'-O position of the ribose in the fully assembled 50S ribosomal subunit. The polypeptide is Ribosomal RNA large subunit methyltransferase E (Treponema pallidum (strain Nichols)).